A 160-amino-acid polypeptide reads, in one-letter code: Phosphoribosyl-ATP pyrophosphatase (160 aa).

It belongs to the PRA-PH family.

The protein resides in the cytoplasm. The enzyme catalyses 1-(5-phospho-beta-D-ribosyl)-ATP + H2O = 1-(5-phospho-beta-D-ribosyl)-5'-AMP + diphosphate + H(+). The protein operates within amino-acid biosynthesis; L-histidine biosynthesis; L-histidine from 5-phospho-alpha-D-ribose 1-diphosphate: step 2/9. This is Phosphoribosyl-ATP pyrophosphatase from Granulibacter bethesdensis (strain ATCC BAA-1260 / CGDNIH1).